The following is a 1316-amino-acid chain: MLDVNFFDELRIGLATADDIRNWSFGEVKKPETINYRTLKPEKDGLFCEKIFGPTRDWECYCGKYKRVRFKGIICERCGVEVTRAKVRRERMGHIELAAPVTHIWYFKGVPSRLGYLLDLAPKDLEKIIYFAAYVITAVDDEMRHNELSTLEAEMVVEKKAIEDQRDADLEARAQKLEADMKELEEEGAKSDVRRKVRDGGEREMRQLRDRAQRELDRLDEIWTTFTKLAPKQLIVDELLYRELQDRYGEYFEGAMGAESIKKLIETFDIDAEADSLRDTIKNGKGQKKLRALKRLKVVAAFQTNRNSPMGMVLDAVPVIPPELRPMVQLDGGRFATSDLNDLYRRVINRNNRLKRLIDLGAPEIIVNNEKRMLQESVDALFDNGRRGRPVTGPGNRPLKSLSDLLKGKQGRFRQNLLGKRVDYSGRSVIVVGPQLKLHQCGLPKLMALELFKPFVMKRLVDLNHAQNIKSAKRMVERQRPQVWDVLEEVISEHPVLLNRAPTLHRLGIQAFEPQLVEGKAIQLHPLVCEAFNADFDGDQMAVHLPLSAEAQAEARILMLSSNNILSPASGRPLAMPRLDMVTGLYFLTTEIEGDKGEFTPAAKDQPESGVYSSPAEAIMAMDRGALSVRAKIRVRLTQLRPPAEIEAERFPDGWNMGDAWTAETTLGRVLFNELLPRGYPFVNKQMHKKVQAAIINDLAERYPMIVVAQTVDKLKDAGFYWATRSGVTVSMADVLVPPEKQEILERYEAAADSIEKQYQRGKLDKGERNEALVKIWQDATEEVGQALRSHYPKDNPIITIVDSGATGNFTQTRTLAGMKGLVTNPKGEFIPRPIKSSFREGLTVLEYFINTHGARKGLADTALRTADSGYLTRRLVDVSQDVIVRETDCETERGITVTLAELQGDQLLRDQHIETSAYARTLATDAVDANGNVVVERGHDLGDPAIDALLAAGITEVKVRSVLTCATGTGVCAMCYGRSMATGKLVDIGEAVGIVAAQSIGEPGTQLTMRTFHQGGVTGGADIVGGLPRVQELFEARIPRNRAPIADVSGRIRLEESDKFYKITIVPDDGGEEVVYDKLSRRQRLKVFKHDDGSERLLTDGDHVEVGQQLLEGSADPHEVLRVQGPREVQIHLVKEVQEVYRAQGVSIHDKHIEVIVRQMLRRVTIIDSGATEFLPGSLTERGEFETENRRVVAEGGEPAAGRPVLMGITKASLATDSWLSAASFQETTRVLTDAAINCRSDKLQGLKENVIIGKLIPAGTGINRYRNIQVQPTEEARAAAYTIPSYEDQYYSPDFGQATGAAVPLDDYGYSDYR.

The Zn(2+) site is built by Cys60, Cys62, Cys75, and Cys78. Residues 183–209 (ELEEEGAKSDVRRKVRDGGEREMRQLR) form a disordered region. 3 residues coordinate Mg(2+): Asp535, Asp537, and Asp539. Zn(2+) contacts are provided by Cys890, Cys966, Cys973, and Cys976.

It belongs to the RNA polymerase beta' chain family. In terms of assembly, the RNAP catalytic core consists of 2 alpha, 1 beta, 1 beta' and 1 omega subunit. When a sigma factor is associated with the core the holoenzyme is formed, which can initiate transcription. Requires Mg(2+) as cofactor. The cofactor is Zn(2+).

The enzyme catalyses RNA(n) + a ribonucleoside 5'-triphosphate = RNA(n+1) + diphosphate. Its function is as follows. DNA-dependent RNA polymerase catalyzes the transcription of DNA into RNA using the four ribonucleoside triphosphates as substrates. The chain is DNA-directed RNA polymerase subunit beta' from Mycolicibacterium gilvum (strain PYR-GCK) (Mycobacterium gilvum (strain PYR-GCK)).